The following is a 334-amino-acid chain: MTKTTILLLCGGGSSEHEISLVSANYIQQQLELTPEFHVIRVEMKKEGWFSEQGALVYLDTNSATLNSDKASYPIDFVVPCIHGFPGETGDIQSMLELAGIPYLGCGPEASANSFNKITSKLWYDALDIPNTPYLFLTQNTPSSIDKAKQAFGHWGSIFVKAARQGSSVGCYKVTTEDQIAPAIEAAFGFSEQVLVEQAVKPRELEVSAYEMNGKLYISKPGEVIAPEGTFYSYEEKYSANSHARTVLEAENLTEKHKELIQTYAERVFIHMKLRHLSRIDFFLTQEGQIYLNEVNTFPGMTPISMFPKMLEHNGHRFSEFLVQCVTNTLVNAK.

The ATP-grasp domain maps to 121-327 (KLWYDALDIP…FSEFLVQCVT (207 aa)). 151 to 206 (AFGHWGSIFVKAARQGSSVGCYKVTTEDQIAPAIEAAFGFSEQVLVEQAVKPRELE) is an ATP binding site. Mg(2+) is bound by residues Asp281, Glu294, and Asn296.

This sequence belongs to the D-alanine--D-alanine ligase family. The cofactor is Mg(2+). Mn(2+) serves as cofactor.

The protein localises to the cytoplasm. The catalysed reaction is 2 D-alanine + ATP = D-alanyl-D-alanine + ADP + phosphate + H(+). Its pathway is cell wall biogenesis; peptidoglycan biosynthesis. Cell wall formation. This Vibrio cholerae serotype O1 (strain ATCC 39315 / El Tor Inaba N16961) protein is D-alanine--D-alanine ligase.